Reading from the N-terminus, the 395-residue chain is Elongation factor Tu (395 aa).

In terms of domain architecture, tr-type G spans 10 to 204 (KPHVNVGTIG…AVDAYIDTPL (195 aa)). The segment at 19–26 (GHVDHGKT) is G1. 19 to 26 (GHVDHGKT) is a GTP binding site. A Mg(2+)-binding site is contributed by T26. Positions 60–64 (GITIN) are G2. Residues 81 to 84 (DCPG) are G3. GTP contacts are provided by residues 81–85 (DCPGH) and 136–139 (NKAD). The tract at residues 136 to 139 (NKAD) is G4. A G5 region spans residues 174–176 (SAL).

The protein belongs to the TRAFAC class translation factor GTPase superfamily. Classic translation factor GTPase family. EF-Tu/EF-1A subfamily. Monomer.

It localises to the cytoplasm. The enzyme catalyses GTP + H2O = GDP + phosphate + H(+). In terms of biological role, GTP hydrolase that promotes the GTP-dependent binding of aminoacyl-tRNA to the A-site of ribosomes during protein biosynthesis. The polypeptide is Elongation factor Tu (Acholeplasma laidlawii (strain PG-8A)).